A 205-amino-acid chain; its full sequence is Small ribosomal subunit protein uS4 (205 aa).

The disordered stretch occupies residues 18–49 (NIWGRPKSPVNKREYGPGQHGQRRKGKLSDFG). In terms of domain architecture, S4 RNA-binding spans 94–157 (RRLDTVVYRA…KQLALVLEAN (64 aa)).

Belongs to the universal ribosomal protein uS4 family. Part of the 30S ribosomal subunit. Contacts protein S5. The interaction surface between S4 and S5 is involved in control of translational fidelity.

Its function is as follows. One of the primary rRNA binding proteins, it binds directly to 16S rRNA where it nucleates assembly of the body of the 30S subunit. In terms of biological role, with S5 and S12 plays an important role in translational accuracy. The chain is Small ribosomal subunit protein uS4 from Nitrobacter hamburgensis (strain DSM 10229 / NCIMB 13809 / X14).